We begin with the raw amino-acid sequence, 564 residues long: NAD-dependent malic enzyme (564 aa).

The active-site Proton donor is the Y102. NAD(+) is bound at residue R155. K173 (proton acceptor) is an active-site residue. E244, D245, and D268 together coordinate a divalent metal cation. Positions 268 and 417 each coordinate NAD(+).

The protein belongs to the malic enzymes family. In terms of assembly, homotetramer. Requires Mg(2+) as cofactor. The cofactor is Mn(2+).

The catalysed reaction is (S)-malate + NAD(+) = pyruvate + CO2 + NADH. The enzyme catalyses oxaloacetate + H(+) = pyruvate + CO2. The protein is NAD-dependent malic enzyme of Pseudomonas aeruginosa (strain UCBPP-PA14).